Reading from the N-terminus, the 399-residue chain is Ras-related GTP-binding protein C (399 aa).

Positions 1-20 (MSLQYGAEETPLAGSYGAAD) are disordered. Residue serine 2 is modified to N-acetylserine. Phosphoserine is present on residues serine 2 and serine 15. Residues arginine 71, serine 72, glycine 73, lysine 74, serine 75, serine 76, threonine 90, glutamate 94, threonine 96, histidine 178, lysine 179, aspartate 181, serine 219, and isoleucine 220 each contribute to the GDP site. Lysine 74 is a GTP binding site. A GTP-binding site is contributed by threonine 90. Threonine 96 serves as a coordination point for GTP. The residue at position 96 (threonine 96) is a Phosphothreonine. GTP is bound at residue aspartate 181.

The protein belongs to the GTR/RAG GTP-binding protein family. Forms a heterodimer with RRAGA, in a sequence-independent manner, and RRAGB. Heterodimerization stabilizes proteins of the heterodimer. The GDP-bound form of RRAGC (in complex with the GTP-bound form of RRAGA or RRAGB), interacts with RPTOR, thereby promoting recruitment of mTORC1 to the lysosomes. Component of the lysosomal folliculin complex (LFC), composed of FLCN, FNIP1 (or FNIP2), RagA/RRAGA or RagB/RRAGB GDP-bound, RagC/RRAGC or RagD/RRAGD GTP-bound, and Ragulator. Interacts with NOL8. Interacts with SH3BP4; the interaction with this negative regulator is most probably direct, preferentially occurs with the inactive GDP-bound form of RRAGB, is negatively regulated by amino acids and prevents interaction with RPTOR. The Rag heterodimer interacts with SLC38A9; the probable amino acid sensor. Interacts with SESN1, SESN2 and SESN3. Interacts with PIP4P1. The Rag heterodimer interacts with the Ragulator complex. The GDP-bound form interacts with TFEB. The GDP-bound form interacts with TFE3.

It localises to the cytoplasm. The protein resides in the nucleus. It is found in the lysosome membrane. It carries out the reaction GTP + H2O = GDP + phosphate + H(+). Its activity is regulated as follows. The activation of RagC/RRAGC is mediated by a GTPase activating protein (GAP). In high-amino acid conditions, activated by GTPase activating protein FLCN that stimulates RRAGC GTPase activity to turn it into its active GDP-bound form. In response to amino acid depletion, the GATOR1 complex inactivates RagC/RRAGC by securing the GTP-bound inactive form. Guanine nucleotide-binding protein that plays a crucial role in the cellular response to amino acid availability through regulation of the mTORC1 signaling cascade. Forms heterodimeric Rag complexes with RagA/RRAGA or RagB/RRAGB and cycles between an inactive GTP-bound and an active GDP-bound form: RagC/RRAGC is in its active form when GDP-bound RagC/RRAGC forms a complex with GTP-bound RagA/RRAGA (or RagB/RRAGB) and in an inactive form when GTP-bound RagC/RRAGC heterodimerizes with GDP-bound RagA/RRAGA (or RagB/RRAGB). In its GDP-bound active form, promotes the recruitment of mTORC1 to the lysosomes and its subsequent activation by the GTPase RHEB. This is a crucial step in the activation of the MTOR signaling cascade by amino acids. Also plays a central role in the non-canonical mTORC1 complex, which acts independently of RHEB and specifically mediates phosphorylation of MiT/TFE factors TFEB and TFE3: GDP-bound RagC/RRAGC mediates recruitment of MiT/TFE factors TFEB and TFE3. This Homo sapiens (Human) protein is Ras-related GTP-binding protein C.